A 126-amino-acid polypeptide reads, in one-letter code: Spermidine export protein MdtJ (126 aa).

The next 4 helical transmembrane spans lie at 1–21 (MIYWIFLALAITAEVIGTLSM), 30–50 (ITGHIVMYIMITASYILLSLA), 54–74 (VALGVAYALWEGIGILFITLF), and 81–101 (EPFSLTKLAGLAILVIGIVML).

This sequence belongs to the drug/metabolite transporter (DMT) superfamily. Small multidrug resistance (SMR) (TC 2.A.7.1) family. MdtJ subfamily. In terms of assembly, forms a complex with MdtI.

Its subcellular location is the cell inner membrane. In terms of biological role, catalyzes the excretion of spermidine. This is Spermidine export protein MdtJ from Sodalis glossinidius (strain morsitans).